The chain runs to 205 residues: Large ribosomal subunit protein uL4 (205 aa).

The interval 44-79 (RAGTKAQKTRREVSGGGAKPWRQKGTGRARAGSSRS) is disordered.

Belongs to the universal ribosomal protein uL4 family. Part of the 50S ribosomal subunit.

Its function is as follows. One of the primary rRNA binding proteins, this protein initially binds near the 5'-end of the 23S rRNA. It is important during the early stages of 50S assembly. It makes multiple contacts with different domains of the 23S rRNA in the assembled 50S subunit and ribosome. Functionally, forms part of the polypeptide exit tunnel. This is Large ribosomal subunit protein uL4 from Coxiella burnetii (strain RSA 331 / Henzerling II).